The chain runs to 440 residues: Protein OSB3, chloroplastic/mitochondrial (440 aa).

The transit peptide at 1–61 (MNLISRTLTR…AKVSVKPPLN (61 aa)) directs the protein to the chloroplast and mitochondrion. Residues 80–178 (ISNWINLIGF…VMVQNLNFVQ (99 aa)) enclose the SSB domain. PDF region stretches follow at residues 218 to 270 (WKHL…LKLE), 294 to 342 (WKDL…SKLP), and 380 to 428 (WKNL…SKLP).

In terms of tissue distribution, expressed primarily in the female gametophyte and in the floral abscission zone.

The protein localises to the mitochondrion. It localises to the plastid. Its subcellular location is the chloroplast. Its function is as follows. Binds single-stranded DNA. This is Protein OSB3, chloroplastic/mitochondrial (OSB3) from Arabidopsis thaliana (Mouse-ear cress).